The primary structure comprises 116 residues: MDKKTARLRRAKRTRRNYIEQGTTRLVIHRTPRHIYAQVVTAEGTVLAAASTVEKAICETVKGTGNVAAAQAVGKAVAERAADKGIEKIAFDRSGFKYHGRVKALADAAREAGLQF.

This sequence belongs to the universal ribosomal protein uL18 family. As to quaternary structure, part of the 50S ribosomal subunit; part of the 5S rRNA/L5/L18/L25 subcomplex. Contacts the 5S and 23S rRNAs.

This is one of the proteins that bind and probably mediate the attachment of the 5S RNA into the large ribosomal subunit, where it forms part of the central protuberance. This Pseudoalteromonas translucida (strain TAC 125) protein is Large ribosomal subunit protein uL18.